Here is a 469-residue protein sequence, read N- to C-terminus: MSAPRTLYDKIWDDHVVNRDPDGTCLLYIDRHLVHEVTSPQAFEGLRIAGRPVHSPTRTLAVVDHNVPTTADRLEGIKNEESRIQVEALAQNAKEFGVEYYSERDKRQGIVHIVGPEQGFTLPGMTIVCGDSHTSTHGAFGALAHGIGTSEVEHVLATQTLIQKKAKNMLVRVDGKLPESVTAKDIILAIIGEIGTAGGTGHVIEFAGEAIRSLSMEGRMTVCNMTIEGGARAGLIAPDETTFDYIKDKPRAPKGETLEQAIAYWKTLKSDEGAHYDKVVILDAANLPPIVSWGSSPEDVTSVEGIVPNPDDIEEENKRTSKWRALDYMGLKPGTRITDIAIDRVFIGSCTNGRIEDLRAAAKIVDGRKVASTVSAMIVPGSGLVKEQAEKEGLDKIFLDAGFEWREPGCSMCLAMNDDRLKPGERCASTSNRNFEGRQGYKSRTHLVSPAMAAAAAIAGHFVDVREWQ.

Positions 350, 410, and 413 each coordinate [4Fe-4S] cluster.

The protein belongs to the aconitase/IPM isomerase family. LeuC type 1 subfamily. Heterodimer of LeuC and LeuD. [4Fe-4S] cluster serves as cofactor.

It catalyses the reaction (2R,3S)-3-isopropylmalate = (2S)-2-isopropylmalate. It participates in amino-acid biosynthesis; L-leucine biosynthesis; L-leucine from 3-methyl-2-oxobutanoate: step 2/4. In terms of biological role, catalyzes the isomerization between 2-isopropylmalate and 3-isopropylmalate, via the formation of 2-isopropylmaleate. This Agrobacterium fabrum (strain C58 / ATCC 33970) (Agrobacterium tumefaciens (strain C58)) protein is 3-isopropylmalate dehydratase large subunit.